We begin with the raw amino-acid sequence, 71 residues long: Conotoxin Ca5.1 (71 aa).

Residues 1 to 19 (MRCVPVFIILLLLASPAAS) form the signal peptide. Positions 20-56 (DPLEKRIQSDLIRAALEDADTKNDPRILEDIVSTALA) are excised as a propeptide.

This sequence belongs to the conotoxin T superfamily. Contains 2 disulfide bonds that can be either 'C1-C3, C2-C4' or 'C1-C4, C2-C3', since these disulfide connectivities have been observed for conotoxins with cysteine framework V (for examples, see AC P0DQQ7 and AC P81755). Expressed by the venom duct.

It localises to the secreted. In Conus caracteristicus (Characteristic cone), this protein is Conotoxin Ca5.1.